A 149-amino-acid polypeptide reads, in one-letter code: UPF0102 protein Bpro_0391 (149 aa).

Positions 1–30 are disordered; sequence MWFSRKQVVKPPPDGSRAQPGQVTTKSRGD.

It belongs to the UPF0102 family.

The protein is UPF0102 protein Bpro_0391 of Polaromonas sp. (strain JS666 / ATCC BAA-500).